The sequence spans 1610 residues: Voltage-dependent L-type calcium channel subunit alpha-1D (1610 aa).

Positions 1 to 99 are disordered; sequence MMMMMMKKMQ…SKKQGNSSNS (99 aa). At 1 to 125 the chain is on the cytoplasmic side; sequence MMMMMMKKMQ…RACISIVEWK (125 aa). Polar residues predominate over residues 37–51; it reads GPTSQPNSSKQTVLS. The segment covering 53 to 66 has biased composition (low complexity); it reads QAAIDAARQAKAAQ. Over residues 81 to 92 the composition is skewed to basic residues; sequence QRKRQQYAKSKK. The I repeat unit spans residues 112–408; the sequence is NPIRRACISI…LVLGVLSGEF (297 aa). The helical transmembrane segment at 126–144 threads the bilayer; it reads PFDIFILLAIFANCVALAI. Residues 145–162 lie on the Extracellular side of the membrane; sequence YIPFPEDDSNSTNHNLEK. The N-linked (GlcNAc...) asparagine glycan is linked to Asn154. Residues 163-182 form a helical membrane-spanning segment; the sequence is VEYAFLIIFTVETFLKIIAY. Over 183-194 the chain is Cytoplasmic; the sequence is GLLLHPNAYVRN. Residues 195–213 traverse the membrane as a helical segment; the sequence is GWNLLDFVIVIVGLFSVIL. Residues 214 to 234 lie on the Extracellular side of the membrane; that stretch reads EQLTKETEGGNHSSGKSGGFD. Residue Asn224 is glycosylated (N-linked (GlcNAc...) asparagine). A helical membrane pass occupies residues 235–253; it reads VKALRAFRVLRPLRLVSGV. Over 254-272 the chain is Cytoplasmic; sequence PSLQVVLNSIIKAMVPLLH. A helical transmembrane segment spans residues 273–292; it reads IALLVLFVIIIYAIIGLELF. Residues 293–380 lie on the Extracellular side of the membrane; sequence IGKMHKTCFF…WMNDAMGFEL (88 aa). Residue Asn328 is glycosylated (N-linked (GlcNAc...) asparagine). Residue Glu363 coordinates Ca(2+). A helical transmembrane segment spans residues 381-405; sequence PWVYFVSLVIFGSFFVLNLVLGVLS. Residues 406 to 522 are Cytoplasmic-facing; that stretch reads GEFSKEREKA…RRCRAAVKSV (117 aa). Residues 428 to 445 form a binding to the beta subunit region; it reads EQLEEDLKGYLDWITQAE. The segment at 448–487 is disordered; sequence DPENEEEGGEEGKRNTSMPTSETESVNTENVSGEGETQGS. The span at 462-487 shows a compositional bias: polar residues; sequence NTSMPTSETESVNTENVSGEGETQGS. Residues 508-754 form an II repeat; that stretch reads NRFNRRRCRA…VFLAIAVDNL (247 aa). Residues 523 to 542 form a helical membrane-spanning segment; sequence TFYWLVIVLVFLNTLTISSE. At 543–557 the chain is on the extracellular side; sequence HYNQPDWLTQIQDIA. Residues 558 to 576 traverse the membrane as a helical segment; the sequence is NKVLLALFTCEMLVKMYSL. Over 577–584 the chain is Cytoplasmic; the sequence is GLQAYFVS. Residues 585-603 form a helical membrane-spanning segment; sequence LFNRFDCFVVCGGITETIL. The Extracellular portion of the chain corresponds to 604–613; the sequence is VELELMSPLG. Residues 614-632 form a helical membrane-spanning segment; sequence VSVFRCVRLLRIFKVTRHW. Residues 633–651 are Cytoplasmic-facing; sequence TSLSNLVASLLNSMKSIAS. Residues 652-672 traverse the membrane as a helical segment; sequence LLLLLFLFIIIFSLLGMQLFG. Topologically, residues 673-726 are extracellular; the sequence is GKFNFDETQTKRSTFDNFPQALLTVFQILTGEDWNAVMYDGIMAYGGPSSSGMI. A Ca(2+)-binding site is contributed by Glu704. The helical transmembrane segment at 727–751 threads the bilayer; sequence VCIYFIILFICGNYILLNVFLAIAV. The Cytoplasmic portion of the chain corresponds to 752 to 884; that stretch reads DNLADAESLN…VGCHKLINHH (133 aa). The span at 765–789 shows a compositional bias: basic and acidic residues; that stretch reads KEEAEEKERKKIARKESLENKKNNK. The interval 765-846 is disordered; that stretch reads KEEAEEKERK…VPAGPRPRRI (82 aa). A compositionally biased stretch (polar residues) spans 790 to 801; sequence PEVNQIANSDNK. Residues 824 to 836 show a composition bias toward acidic residues; that stretch reads VGEEEEEEEEEPE. One copy of the III repeat lies at 871–1153; the sequence is NPIRVGCHKL…IFVGFVIVTF (283 aa). The chain crosses the membrane as a helical span at residues 885–903; sequence IFTNLILVFIMLSSAALAA. The Extracellular portion of the chain corresponds to 904–919; the sequence is EDPIRSHSFRNTILGY. Residues 920–939 form a helical membrane-spanning segment; sequence FDYAFTAIFTVEILLKMTTF. Residues 940–951 lie on the Cytoplasmic side of the membrane; that stretch reads GAFLHKGAFCRN. The chain crosses the membrane as a helical span at residues 952–970; sequence YFNLLDMLVVGVSLVSFGI. Residues 971–976 are Extracellular-facing; sequence QSSAIS. A helical transmembrane segment spans residues 977-996; the sequence is VVKILRVLRVLRPLRAINRA. Over 997–1015 the chain is Cytoplasmic; it reads KGLKHVVQCVFVAIRTIGN. Residues 1016–1035 traverse the membrane as a helical segment; it reads IMIVTTLLQFMFACIGVQLF. The Extracellular segment spans residues 1036–1125; sequence KGKFYRCTDE…AGPVYNHRVE (90 aa). A dihydropyridine binding region spans residues 1073–1163; the sequence is RIWQNSDFNF…QEQGEKEYKN (91 aa). Glu1099 serves as a coordination point for Ca(2+). Residues 1126–1146 traverse the membrane as a helical segment; it reads ISIFFIIYIIIVAFFMMNIFV. Residues 1147-1203 are Cytoplasmic-facing; it reads GFVIVTFQEQGEKEYKNCELDKNQRQCVEYALKARPLRRYIPKNPYQYKFWYVVNSS. The stretch at 1190-1465 is one IV repeat; sequence NPYQYKFWYV…LFVAVIMDNF (276 aa). Residues 1204–1222 form a helical membrane-spanning segment; the sequence is PFEYMMFVLIMLNTLCLAM. Over 1223-1237 the chain is Extracellular; sequence QHYEQSKMFNDAMDI. The helical transmembrane segment at 1238-1257 threads the bilayer; that stretch reads LNMVFTGVFTVEMVLKVIAF. At 1258–1264 the chain is on the cytoplasmic side; the sequence is KPKGYFS. Residues 1265-1286 traverse the membrane as a helical segment; the sequence is DAWNTFDSLIVIGSIIDVALSE. The Extracellular portion of the chain corresponds to 1287 to 1311; sequence ADPTESESLPLPTATPGNSEESNRI. A helical membrane pass occupies residues 1312-1331; sequence SITFFRLFRVMRLVKLLSRG. The Cytoplasmic segment spans residues 1332-1350; sequence EGIRTLLWTFIKSFQALPY. A helical transmembrane segment spans residues 1351–1370; the sequence is VALLIAMLFFIYAVIGMQMF. Over 1371 to 1437 the chain is Extracellular; the sequence is GKVAMRDNNQ…GEEYTCGSNF (67 aa). Residues 1418-1484 are dihydropyridine binding; that stretch reads LCDPDSDYNP…LGPHHLDEFK (67 aa). Residues 1430-1473 are phenylalkylamine binding; it reads EYTCGSNFAIVYFISFYMLCAFLIINLFVAVIMDNFDYLTRDWS. The chain crosses the membrane as a helical span at residues 1438–1462; that stretch reads AIVYFISFYMLCAFLIINLFVAVIM. Residues 1463 to 1610 are Cytoplasmic-facing; that stretch reads DNFDYLTRDW…CFLSPSRSRS (148 aa).

Belongs to the calcium channel alpha-1 subunit (TC 1.A.1.11) family. CACNA1D subfamily. In terms of assembly, voltage-dependent calcium channels are multisubunit complexes, consisting of alpha-1, alpha-2, beta and delta subunits in a 1:1:1:1 ratio. The channel activity is directed by the pore-forming and voltage-sensitive alpha-1 subunit. In many cases, this subunit is sufficient to generate voltage-sensitive calcium channel activity. The auxiliary subunits beta and alpha-2/delta linked by a disulfide bridge regulate the channel activity. Interacts with RIMBP2. Interacts with CABP1 and CABP4, resulting in a near elimination of calcium-dependent inactivation of the channel. Expressed in brain, heart and skeletal muscle.

It localises to the membrane. The catalysed reaction is Ca(2+)(in) = Ca(2+)(out). In terms of biological role, voltage-sensitive calcium channels (VSCC) mediate the entry of calcium ions into excitable cells and are also involved in a variety of calcium-dependent processes, including muscle contraction, hormone or neurotransmitter release, gene expression, cell motility, cell division and cell death. The isoform alpha-1D gives rise to L-type calcium currents. Long-lasting (L-type) calcium channels belong to the 'high-voltage activated' (HVA) group. They are blocked by dihydropyridines (DHP), phenylalkylamines, and by benzothiazepines. This is Voltage-dependent L-type calcium channel subunit alpha-1D (CACNA1D) from Mesocricetus auratus (Golden hamster).